We begin with the raw amino-acid sequence, 411 residues long: 2,3-bisphosphoglycerate-independent phosphoglycerate mutase (411 aa).

It belongs to the BPG-independent phosphoglycerate mutase family. A-PGAM subfamily.

The enzyme catalyses (2R)-2-phosphoglycerate = (2R)-3-phosphoglycerate. The protein operates within carbohydrate degradation; glycolysis; pyruvate from D-glyceraldehyde 3-phosphate: step 3/5. In terms of biological role, catalyzes the interconversion of 2-phosphoglycerate and 3-phosphoglycerate. The chain is 2,3-bisphosphoglycerate-independent phosphoglycerate mutase from Pyrobaculum neutrophilum (strain DSM 2338 / JCM 9278 / NBRC 100436 / V24Sta) (Thermoproteus neutrophilus).